Consider the following 511-residue polypeptide: uncharacterized protein (511 aa).

The next 14 membrane-spanning stretches (helical) occupy residues 7–27 (WVISLLAVLAVGPGLMSNTAL), 46–66 (VNPILIGNMAFALLVPAGPLL), 80–100 (LPVFILGSLLIACSGDIALMA), 107–127 (GAATGVMLMIMIPMLVLSFPI), 134–154 (LLVLIGGFYGSVIIGTILGTI), 163–183 (WLFFIFGTLSLIGVAVSYFFL), 200–220 (AGILLSVFLAAASAVSFIFLQ), 226–246 (SGYVWIGFGVTLCLLIGLLIV), 266–286 (VLGLLIIAAGTITVAVSLSAF), 301–321 (LILLSLTLLIGVAIAAILSAL), 329–349 (GMLGIIGGLILVFVNFQWLHI), 357–377 (MFAALFIMLAAGTGLTVAAGL), 394–414 (TAVQFLRLFVYMGVPILIGFF), and 437–457 (LFFISFILSVLLVCLSFCMNA). The disordered stretch occupies residues 465–486 (AHKPHDKAKTAPEKPAVSAQGL).

Belongs to the major facilitator superfamily.

It is found in the cell membrane. This is an uncharacterized protein from Bacillus subtilis (strain 168).